We begin with the raw amino-acid sequence, 298 residues long: 33 kDa chaperonin (298 aa).

Cystine bridges form between C237/C239 and C270/C273.

It belongs to the HSP33 family. Under oxidizing conditions two disulfide bonds are formed involving the reactive cysteines. Under reducing conditions zinc is bound to the reactive cysteines and the protein is inactive.

The protein resides in the cytoplasm. In terms of biological role, redox regulated molecular chaperone. Protects both thermally unfolding and oxidatively damaged proteins from irreversible aggregation. Plays an important role in the bacterial defense system toward oxidative stress. The chain is 33 kDa chaperonin from Enterococcus faecalis (strain ATCC 700802 / V583).